A 208-amino-acid polypeptide reads, in one-letter code: N-(5'-phosphoribosyl)anthranilate isomerase (208 aa).

This sequence belongs to the TrpF family.

The enzyme catalyses N-(5-phospho-beta-D-ribosyl)anthranilate = 1-(2-carboxyphenylamino)-1-deoxy-D-ribulose 5-phosphate. It functions in the pathway amino-acid biosynthesis; L-tryptophan biosynthesis; L-tryptophan from chorismate: step 3/5. The chain is N-(5'-phosphoribosyl)anthranilate isomerase from Nitrosomonas eutropha (strain DSM 101675 / C91 / Nm57).